The following is a 406-amino-acid chain: Probable transcription factor FPSE_09188 (406 aa).

The interval Met1–Gly72 is disordered. Positions Ala7–Ser20 are enriched in low complexity.

The protein belongs to the bZIP family.

It localises to the nucleus. Functionally, the two putative transcription factors FPSE_09188 and FPSE_09189 could be responsible for orchestrating expression of the W493 A and B biosynthesis cluster genes. W493 A and B consist of six amino acid residues D-allo-thr, L-Ala, D-Ala, L-Gln, D-Tyr, and L-Val/L-Ile linked to a 3-hydroxy-4-methyltetradecanoic acid polyketide chain. The polypeptide is Probable transcription factor FPSE_09188 (Fusarium pseudograminearum (strain CS3096) (Wheat and barley crown-rot fungus)).